The following is a 612-amino-acid chain: Vitamin B12 transporter BtuB (612 aa).

A signal peptide spans 1–20 (MIKKSLLCTALSVTAFSGWA). The TonB box signature appears at 26 to 33 (DTLVVTAN). Positions 38–152 (PRSAVLAPIT…IGGVVNIITT (115 aa)) constitute a TBDR plug domain. Cyanocob(III)alamin-binding positions include serine 85, asparagine 92, and 110–111 (VS). In terms of domain architecture, TBDR beta-barrel spans 155–612 (KPGTELTAGV…EYTLSGSYTF (458 aa)). The next 3 beta stranded transmembrane spans lie at 158-165 (TELTAGVG), 169-178 (YQNYDVSTQQ), and 184-195 (TRVTLMGDYAYT). Residues aspartate 199, glutamine 211, aspartate 213, and aspartate 215 each coordinate Ca(2+). The next 2 membrane-spanning stretches (beta stranded) occupy residues 217–227 (FLSKTLYGALE) and 232–248 (DTWSGFVRGYGYDNRTN). Ca(2+)-binding residues include tyrosine 249, aspartate 250, and aspartate 261. 14 beta stranded membrane-spanning segments follow: residues 263–277 (RKLYSQSWDAGLRFN), 279–296 (ELIQSQLVSSYSHSKDYN), 309–325 (TLDEMKQYNVQWSNSIV), 328–337 (HGNVGAGVDW), 353–369 (YDQRNTGLYLTGLQQLG), 371–381 (FTFEGAARSDD), 385–400 (FGRHGTWQTSAGWEFI), 403–417 (YRFIASYGTSYKAPN), 434–443 (QSKQWEGAFE), 449–458 (VNWRVSGYRN), 473–490 (YFNEGKVRIKGVEATANF), 494–509 (PLAHTLSYDMVDSRNA), 517–529 (RRSKQQVKYQLDW), and 535–550 (DWGLTYHYLGTRYDTD). Threonine 309 provides a ligand contact to cyanocob(III)alamin. Arginine 517 lines the cyanocob(III)alamin pocket. Tyrosine 551 serves as a coordination point for cyanocob(III)alamin. Beta stranded transmembrane passes span 556–570 (PVKMGGVSLWDLAVS), 583–594 (IANRFDKDYETV), and 600–612 (AGREYTLSGSYTF). Positions 595 to 612 (YGYATAGREYTLSGSYTF) match the TonB C-terminal box motif.

It belongs to the TonB-dependent receptor family. BtuB (TC 1.B.14.3.1) subfamily.

The protein resides in the cell outer membrane. Involved in the active translocation of vitamin B12 (cyanocobalamin) across the outer membrane to the periplasmic space. It derives its energy for transport by interacting with the trans-periplasmic membrane protein TonB. This Citrobacter freundii protein is Vitamin B12 transporter BtuB.